A 440-amino-acid polypeptide reads, in one-letter code: UDP-N-acetylglucosamine 1-carboxyvinyltransferase (440 aa).

Position 22 to 23 (22 to 23) interacts with phosphoenolpyruvate; the sequence is KN. UDP-N-acetyl-alpha-D-glucosamine is bound at residue arginine 102. Cysteine 126 acts as the Proton donor in catalysis. Position 126 is a 2-(S-cysteinyl)pyruvic acid O-phosphothioketal (cysteine 126). UDP-N-acetyl-alpha-D-glucosamine-binding positions include 131–135, aspartate 320, and isoleucine 342; that span reads RPVDQ.

It belongs to the EPSP synthase family. MurA subfamily.

The protein resides in the cytoplasm. The catalysed reaction is phosphoenolpyruvate + UDP-N-acetyl-alpha-D-glucosamine = UDP-N-acetyl-3-O-(1-carboxyvinyl)-alpha-D-glucosamine + phosphate. Its pathway is cell wall biogenesis; peptidoglycan biosynthesis. In terms of biological role, cell wall formation. Adds enolpyruvyl to UDP-N-acetylglucosamine. The sequence is that of UDP-N-acetylglucosamine 1-carboxyvinyltransferase from Acidovorax ebreus (strain TPSY) (Diaphorobacter sp. (strain TPSY)).